The sequence spans 429 residues: Adenylosuccinate synthetase (429 aa).

Residues 13 to 19 and 41 to 43 contribute to the GTP site; these read GDEGKGK and GHT. Residue Asp14 is the Proton acceptor of the active site. Asp14 and Gly41 together coordinate Mg(2+). IMP contacts are provided by residues 14-17, 39-42, Thr130, Arg144, Gln225, Thr240, and Arg304; these read DEGK and NAGH. His42 (proton donor) is an active-site residue. Residue 300–306 coordinates substrate; that stretch reads ATTGRRR. GTP contacts are provided by residues Arg306, 332–334, and 417–419; these read KLD and STG.

It belongs to the adenylosuccinate synthetase family. As to quaternary structure, homodimer. Mg(2+) serves as cofactor.

It is found in the cytoplasm. The enzyme catalyses IMP + L-aspartate + GTP = N(6)-(1,2-dicarboxyethyl)-AMP + GDP + phosphate + 2 H(+). It functions in the pathway purine metabolism; AMP biosynthesis via de novo pathway; AMP from IMP: step 1/2. Plays an important role in the de novo pathway of purine nucleotide biosynthesis. Catalyzes the first committed step in the biosynthesis of AMP from IMP. The protein is Adenylosuccinate synthetase of Buchnera aphidicola subsp. Baizongia pistaciae (strain Bp).